The sequence spans 518 residues: Calcium and calcium/calmodulin-dependent serine/threonine-protein kinase (518 aa).

Residues 13–300 form the Protein kinase domain; that stretch reads YEISEILGRG…AQELLSHPWV (288 aa). ATP contacts are provided by residues 19–27 and lysine 44; that span reads LGRGGFSVV. The active-site Proton acceptor is aspartate 165. Threonine 265 carries the post-translational modification Phosphothreonine. Residues 323-336 are calmodulin-binding; that stretch reads ARRKLRAAAIASVW. A coiled-coil region spans residues 344-365; sequence TKKLRSLVGTYDLKEEEIESLR. EF-hand domains follow at residues 394 to 429, 430 to 465, and 472 to 507; these read SLIPLAPRIFDLFDNNRDGTIDMREILCGFSSLKNS, KGDDALRLCFQMYDTDRSGCITKEEVASMLCALPEE, and TEPGKLDEIFDLMDANSDGKVTFEEFKAAMQRDSSL. Positions 407, 409, 411, 413, 418, 443, 445, 447, 449, 454, 485, 487, 489, 491, and 496 each coordinate Ca(2+).

Belongs to the protein kinase superfamily. CAMK Ser/Thr protein kinase family. CaMK subfamily. Interacts with IPD3. Interacts with CIP73. In terms of processing, autophosphorylation stimulated by calcium. Occurs probably by an intermolecular mechanism. As to expression, mainly expressed in roots and nodules. Detected in leaves, stems and cotyledons.

Its subcellular location is the nucleus. The enzyme catalyses L-seryl-[protein] + ATP = O-phospho-L-seryl-[protein] + ADP + H(+). It catalyses the reaction L-threonyl-[protein] + ATP = O-phospho-L-threonyl-[protein] + ADP + H(+). Activated by calcium/calmodulin binding after calcium-induced autophosphorylation. In terms of biological role, calcium- and calmodulin-dependent protein kinase necessary and sufficient for dedifferentiation of root cortical cells into nodule initials. Not required for calcium spiking. Acts as central regulator of the nodule organogenesis program. Required for root hair curling and infection thread (IT) formation upon rhizobial infection, and arbuscule formation during arbuscular mycorrhiza (AM) fungal infection. Phosphorylates the downstream target IPD3, a protein required for root infection by symbiotic rhizobia and AM fungi. Phosphorylates the downstream target CIP73, a protein required for root nodule organogenesis. Mediates the phosphorylation of leghemoglobins (e.g. LB1) to modulate their oxygen O(2) affinity, thus regulating the diffusion of oxygen to the bacteroids in nodules. The sequence is that of Calcium and calcium/calmodulin-dependent serine/threonine-protein kinase from Lotus japonicus (Lotus corniculatus var. japonicus).